Here is a 62-residue protein sequence, read N- to C-terminus: Small ribosomal subunit protein eS27 (62 aa).

Cysteine 17, cysteine 20, cysteine 36, and cysteine 39 together coordinate Zn(2+). The C4-type zinc finger occupies 17–39; the sequence is CPDCENEQIIFEKASTVVDCVVC.

The protein belongs to the eukaryotic ribosomal protein eS27 family. As to quaternary structure, part of the 30S ribosomal subunit. The cofactor is Zn(2+).

This Methanosphaerula palustris (strain ATCC BAA-1556 / DSM 19958 / E1-9c) protein is Small ribosomal subunit protein eS27.